A 360-amino-acid polypeptide reads, in one-letter code: Peptide chain release factor 1 (360 aa).

Q235 carries the post-translational modification N5-methylglutamine.

It belongs to the prokaryotic/mitochondrial release factor family. Post-translationally, methylated by PrmC. Methylation increases the termination efficiency of RF1.

Its subcellular location is the cytoplasm. Functionally, peptide chain release factor 1 directs the termination of translation in response to the peptide chain termination codons UAG and UAA. The sequence is that of Peptide chain release factor 1 from Burkholderia ambifaria (strain MC40-6).